Consider the following 339-residue polypeptide: Lipoate-protein ligase A (339 aa).

Residues 29–217 (PKKQSILFLW…AFFQHYGMKV (189 aa)) form the BPL/LPL catalytic domain. ATP is bound by residues R71, 76–79 (GAVF), and K135. K135 is a (R)-lipoate binding site.

The protein belongs to the LplA family. Monomer.

Its subcellular location is the cytoplasm. It carries out the reaction L-lysyl-[lipoyl-carrier protein] + (R)-lipoate + ATP = N(6)-[(R)-lipoyl]-L-lysyl-[lipoyl-carrier protein] + AMP + diphosphate + H(+). Its pathway is protein modification; protein lipoylation via exogenous pathway; protein N(6)-(lipoyl)lysine from lipoate: step 1/2. The protein operates within protein modification; protein lipoylation via exogenous pathway; protein N(6)-(lipoyl)lysine from lipoate: step 2/2. Its function is as follows. Catalyzes both the ATP-dependent activation of exogenously supplied lipoate to lipoyl-AMP and the transfer of the activated lipoyl onto the lipoyl domains of lipoate-dependent enzymes. This chain is Lipoate-protein ligase A, found in Blochmanniella pennsylvanica (strain BPEN).